The primary structure comprises 195 residues: Probable nicotinate-nucleotide adenylyltransferase (195 aa).

The protein belongs to the NadD family.

The catalysed reaction is nicotinate beta-D-ribonucleotide + ATP + H(+) = deamido-NAD(+) + diphosphate. The protein operates within cofactor biosynthesis; NAD(+) biosynthesis; deamido-NAD(+) from nicotinate D-ribonucleotide: step 1/1. In terms of biological role, catalyzes the reversible adenylation of nicotinate mononucleotide (NaMN) to nicotinic acid adenine dinucleotide (NaAD). In Gluconobacter oxydans (strain 621H) (Gluconobacter suboxydans), this protein is Probable nicotinate-nucleotide adenylyltransferase.